The sequence spans 278 residues: 4-deoxy-L-threo-5-hexosulose-uronate ketol-isomerase (278 aa).

Residues H196, H198, E203, and H245 each contribute to the Zn(2+) site.

Belongs to the KduI family. Requires Zn(2+) as cofactor.

The enzyme catalyses 5-dehydro-4-deoxy-D-glucuronate = 3-deoxy-D-glycero-2,5-hexodiulosonate. It participates in glycan metabolism; pectin degradation; 2-dehydro-3-deoxy-D-gluconate from pectin: step 4/5. Its function is as follows. Catalyzes the isomerization of 5-dehydro-4-deoxy-D-glucuronate to 3-deoxy-D-glycero-2,5-hexodiulosonate. The sequence is that of 4-deoxy-L-threo-5-hexosulose-uronate ketol-isomerase from Salmonella choleraesuis (strain SC-B67).